Reading from the N-terminus, the 518-residue chain is Bifunctional enzyme NanE/NanK (518 aa).

Residues 1-234 (MCRVQGMIEE…DAVESAAKPS (234 aa)) are manNAc-6-P epimerase. Positions 235-518 (SPVLAFDIGG…VADLAATYFS (284 aa)) are manNAc kinase. ATP-binding positions include 239–246 (AFDIGGTK) and 365–372 (GIGGGIVL).

In the N-terminal section; belongs to the NanE family. This sequence in the C-terminal section; belongs to the ROK (NagC/XylR) family. NanK subfamily.

The catalysed reaction is an N-acyl-D-glucosamine 6-phosphate = an N-acyl-D-mannosamine 6-phosphate. The enzyme catalyses an N-acyl-D-mannosamine + ATP = an N-acyl-D-mannosamine 6-phosphate + ADP + H(+). The protein operates within amino-sugar metabolism; N-acetylneuraminate degradation; D-fructose 6-phosphate from N-acetylneuraminate: step 2/5. Its pathway is amino-sugar metabolism; N-acetylneuraminate degradation; D-fructose 6-phosphate from N-acetylneuraminate: step 3/5. Functionally, converts N-acetylmannosamine-6-phosphate (ManNAc-6-P) to N-acetylglucosamine-6-phosphate (GlcNAc-6-P). In terms of biological role, catalyzes the phosphorylation of N-acetylmannosamine (ManNAc) to ManNAc-6-P. The chain is Bifunctional enzyme NanE/NanK (nanEK) from Brucella melitensis biotype 1 (strain ATCC 23456 / CCUG 17765 / NCTC 10094 / 16M).